We begin with the raw amino-acid sequence, 953 residues long: Serine-aspartate repeat-containing protein C (953 aa).

The signal sequence occupies residues 1 to 50 (MNNKKTATNRKGMIPNRLNKFSIRKYSVGTASILVGTTLIFGLSGHEAKA). A disordered region spans residues 51 to 160 (AEHTNGELNQ…AKNVSTTPKT (110 aa)). Residues 51-495 (AEHTNGELNQ…GSSTANGDQK (445 aa)) form a ligand binding A region region. A compositionally biased stretch (polar residues) spans 56–71 (GELNQSKNETTAPSEN). Positions 72–83 (KTTEKVDSRQLK) are enriched in basic and acidic residues. Positions 84–114 (DNTQTATADQPKVTMSDSATVKETSSNMQSP) are enriched in polar residues. Low complexity predominate over residues 115-132 (QNATASQSTTQTSNVTTN). The segment covering 133–160 (DKSSTTYSNETDKSNLTQAKNVSTTPKT) has biased composition (polar residues). CNA-B domains are found at residues 496–606 (KYNL…YKTP) and 607–717 (KYSL…EEET). Residues 678 to 933 (TQTGTNTTED…NNSNNGTLFG (256 aa)) form a disordered region. 2 stretches are compositionally biased toward acidic residues: residues 685–695 (TEDDKDADGGE) and 712–892 (YYEE…DSDS). An LPXTG sorting signal motif is present at residues 916–920 (LPETG). Residues 918–933 (ETGSENNNSNNGTLFG) show a composition bias toward low complexity. Residue T919 is modified to Pentaglycyl murein peptidoglycan amidated threonine. A propeptide spans 920 to 953 (GSENNNSNNGTLFGGLFAALGSLLLFGRRKKQNK) (removed by sortase).

This sequence belongs to the serine-aspartate repeat-containing protein (SDr) family. As to quaternary structure, homodimerizes; via N2-Domain. Interacts with host NRXN1; this interaction mediates bacterial attachment to host cells.

Its subcellular location is the secreted. It localises to the cell wall. Functionally, cell surface-associated calcium-binding protein which plays an important role in adhesion and pathogenesis. Mediates interactions with components of the extracellular matrix such as host NRXN1 to promote bacterial adhesion. The sequence is that of Serine-aspartate repeat-containing protein C (sdrC) from Staphylococcus aureus (strain Mu50 / ATCC 700699).